An 855-amino-acid chain; its full sequence is Oxysterol-binding protein-related protein 3 (855 aa).

Residues 1 to 32 are disordered; it reads MSDEKNLGVSQKLVSPSRSTSSCSSKQGSRQD. 2 positions are modified to phosphoserine: Ser15 and Ser33. Residues 15–31 are compositionally biased toward low complexity; sequence SPSRSTSSCSSKQGSRQ. The region spanning 50–145 is the PH domain; it reads PPVQKGFLLK…WVSKLRHHRM (96 aa). The FFAT 1 signature appears at 161-167; it reads FFSGSSV. Ser199, Ser250, Ser272, Ser277, Ser288, Ser291, Ser340, Ser393, Ser405, and Ser408 each carry phosphoserine. Positions 274–293 are disordered; it reads PNLSTLDFGEEKSYSDGSEA. The segment at 377-396 is disordered; sequence DPPAVPKPGDNLAEENSRDE. Residues 450–454 carry the FFAT 2 motif; that stretch reads LSLDN. The disordered stretch occupies residues 468–490; it reads PVLESSGEARSKRRTSLPAPGPN.

Belongs to the OSBP family. As to quaternary structure, homodimer. Interacts with RRAS. Interacts (phosphorylated form) with VAPA. Interacts with OSBPL6. Post-translationally, phosphorylation is enhanced in vitro by phorbol-12-myristate-13-acetate (PMA), forskolin and calcium ionophore A23187. Phosphorylation seems to be stimulated in conditions of low cell-cell (or cell-matrix) adhesion. Expressed in spinal ganglia. Expressed in a subset of small lymphocytes (at protein level).

Its subcellular location is the endoplasmic reticulum membrane. It is found in the cytoplasm. The protein localises to the cytosol. It localises to the cell membrane. The protein resides in the cell projection. Its subcellular location is the filopodium tip. It is found in the nucleus membrane. Its function is as follows. Phosphoinositide-binding protein which associates with both cell and endoplasmic reticulum (ER) membranes. Can bind to the ER membrane protein VAPA and recruit VAPA to plasma membrane sites, thus linking these intracellular compartments. The ORP3-VAPA complex stimulates RRAS signaling which in turn attenuates integrin beta-1 (ITGB1) activation at the cell surface. With VAPA, may regulate ER morphology. Has a role in regulation of the actin cytoskeleton, cell polarity and cell adhesion. Binds to phosphoinositides with preference for PI(3,4)P2 and PI(3,4,5)P3. Also binds 25-hydroxycholesterol and cholesterol. The chain is Oxysterol-binding protein-related protein 3 (Osbpl3) from Mus musculus (Mouse).